The chain runs to 146 residues: Large ribosomal subunit protein uL15 (146 aa).

Residues 1–46 are disordered; sequence MKLHELQPAPGSRKKAVRVGRGIGSGNGKTAGRGHKGQKARSGGGV. Positions 21 to 31 are enriched in gly residues; that stretch reads RGIGSGNGKTA.

It belongs to the universal ribosomal protein uL15 family. As to quaternary structure, part of the 50S ribosomal subunit.

Its function is as follows. Binds to the 23S rRNA. The chain is Large ribosomal subunit protein uL15 from Geobacillus thermodenitrificans (strain NG80-2).